Consider the following 569-residue polypeptide: Glutamate--tRNA ligase, chloroplastic/mitochondrial (569 aa).

59-61 (RFA) provides a ligand contact to L-glutamate. A 'HIGH' region motif is present at residues 62-72 (PSPTGNLHVGG). H69 is a binding site for ATP. L-glutamate is bound by residues E95, 247–251 (YNFCV), and R265. Residues E268 and 303–307 (KLSKR) each bind ATP. The 'KMSKS' region signature appears at 303-307 (KLSKR).

The protein belongs to the class-I aminoacyl-tRNA synthetase family. Glutamate--tRNA ligase type 1 subfamily.

It is found in the plastid. Its subcellular location is the chloroplast. It localises to the mitochondrion. It carries out the reaction tRNA(Glu) + L-glutamate + ATP = L-glutamyl-tRNA(Glu) + AMP + diphosphate. Functionally, catalyzes the attachment of glutamate to tRNA(Glu) in a two-step reaction: glutamate is first activated by ATP to form Glu-AMP and then transferred to the acceptor end of tRNA(Glu). The polypeptide is Glutamate--tRNA ligase, chloroplastic/mitochondrial (Nicotiana tabacum (Common tobacco)).